The sequence spans 128 residues: Ribonuclease P protein component (128 aa).

It belongs to the RnpA family. Consists of a catalytic RNA component (M1 or rnpB) and a protein subunit.

It carries out the reaction Endonucleolytic cleavage of RNA, removing 5'-extranucleotides from tRNA precursor.. Functionally, RNaseP catalyzes the removal of the 5'-leader sequence from pre-tRNA to produce the mature 5'-terminus. It can also cleave other RNA substrates such as 4.5S RNA. The protein component plays an auxiliary but essential role in vivo by binding to the 5'-leader sequence and broadening the substrate specificity of the ribozyme. This chain is Ribonuclease P protein component, found in Prochlorococcus marinus (strain NATL2A).